Reading from the N-terminus, the 74-residue chain is MARAFFRRRKSCPFSAKDAPRIDYKDVRLLQGFVSERGKIVPSRITAVSAKKQRELAQAIKRARHIGLLPYIVK.

Belongs to the bacterial ribosomal protein bS18 family. As to quaternary structure, part of the 30S ribosomal subunit. Forms a tight heterodimer with protein bS6.

Binds as a heterodimer with protein bS6 to the central domain of the 16S rRNA, where it helps stabilize the platform of the 30S subunit. This chain is Small ribosomal subunit protein bS18, found in Rhizorhabdus wittichii (strain DSM 6014 / CCUG 31198 / JCM 15750 / NBRC 105917 / EY 4224 / RW1) (Sphingomonas wittichii).